The primary structure comprises 351 residues: Porphobilinogen deaminase (351 aa).

At Cys242 the chain carries S-(dipyrrolylmethanemethyl)cysteine.

The protein belongs to the HMBS family. As to quaternary structure, monomer. The cofactor is dipyrromethane.

The enzyme catalyses 4 porphobilinogen + H2O = hydroxymethylbilane + 4 NH4(+). It functions in the pathway porphyrin-containing compound metabolism; protoporphyrin-IX biosynthesis; coproporphyrinogen-III from 5-aminolevulinate: step 2/4. Tetrapolymerization of the monopyrrole PBG into the hydroxymethylbilane pre-uroporphyrinogen in several discrete steps. The protein is Porphobilinogen deaminase of Rickettsia peacockii (strain Rustic).